Consider the following 253-residue polypeptide: 5'/3'-nucleotidase SurE (253 aa).

A divalent metal cation contacts are provided by Asp-8, Asp-9, Ser-39, and Asn-92.

It belongs to the SurE nucleotidase family. A divalent metal cation serves as cofactor.

The protein localises to the cytoplasm. It catalyses the reaction a ribonucleoside 5'-phosphate + H2O = a ribonucleoside + phosphate. The enzyme catalyses a ribonucleoside 3'-phosphate + H2O = a ribonucleoside + phosphate. The catalysed reaction is [phosphate](n) + H2O = [phosphate](n-1) + phosphate + H(+). In terms of biological role, nucleotidase with a broad substrate specificity as it can dephosphorylate various ribo- and deoxyribonucleoside 5'-monophosphates and ribonucleoside 3'-monophosphates with highest affinity to 3'-AMP. Also hydrolyzes polyphosphate (exopolyphosphatase activity) with the preference for short-chain-length substrates (P20-25). Might be involved in the regulation of dNTP and NTP pools, and in the turnover of 3'-mononucleotides produced by numerous intracellular RNases (T1, T2, and F) during the degradation of various RNAs. The protein is 5'/3'-nucleotidase SurE of Salmonella arizonae (strain ATCC BAA-731 / CDC346-86 / RSK2980).